The chain runs to 349 residues: MELELSLGDSPAPVKATIAPTPVLIPTCMGDEEDLELVLGVRATRRDEQDDQTTCTQSSEEAMEGEEDETRPHGEAPVESLSFPLFVSSAETGSANSEMCTRGFDVNTRPADGGAEAGRPSSPSSMQEASTRQQVADQEAADDEDNGGGGARKKLRLSKEQSSFLEDSFKEHSTLTPKQKSDLANRLNLRPRQVEVWFQNRRARTKLKQTEVDCEHLKRCCERLTRENRRLQREVAELRGALRTTTSSYPPLYGLHHLPAAAGTVFRVCPSCEHSKVVAAAASESFSPRVFAGGGAPAAITAAAAVPSPGAGSPPSSSAALFGARRPHFGPFAAAVIPPVLRRQPSATS.

A disordered region spans residues 42 to 186 (RATRRDEQDD…PKQKSDLANR (145 aa)). Composition is skewed to polar residues over residues 89–99 (SAETGSANSEM) and 121–135 (SSPS…RQQV). Positions 150–209 (GARKKLRLSKEQSSFLEDSFKEHSTLTPKQKSDLANRLNLRPRQVEVWFQNRRARTKLKQ) form a DNA-binding region, homeobox. Residues 167–183 (DSFKEHSTLTPKQKSDL) show a composition bias toward basic and acidic residues. Residues 208–252 (KQTEVDCEHLKRCCERLTRENRRLQREVAELRGALRTTTSSYPPL) are leucine-zipper.

It belongs to the HD-ZIP homeobox family. Class II subfamily. As to quaternary structure, homodimer. May form a heterodimer with HOX1, HOX2 or HOX3. As to expression, expressed in seedlings, roots, leaves, nodes, internodes, flowers and embryo.

It is found in the nucleus. Functionally, probable transcription factor that binds to the DNA sequence 5'-CAAT[GC]ATTG-3'. In Oryza sativa subsp. indica (Rice), this protein is Homeobox-leucine zipper protein HOX7 (HOX7).